We begin with the raw amino-acid sequence, 84 residues long: ATPase-stabilizing factor 15 kDa protein (84 aa).

Over residues 1–18 (MTRTNKWTEREGKADPKY) the composition is skewed to basic and acidic residues. The tract at residues 1–84 (MTRTNKWTER…EQKFENVQKE (84 aa)) is disordered. Phosphoserine is present on residues Ser-28 and Ser-69. The span at 74–84 (HEQKFENVQKE) shows a compositional bias: basic and acidic residues.

This sequence belongs to the STF2 family.

It is found in the mitochondrion. The protein resides in the cytoplasm. Its function is as follows. Found to stabilize, together with STF1, a complex of intrinsic ATPase inhibitor INH1 and proton-translocating ATPase (F(1)F(0)-ATPase) in mitochondrial membranes. Binds to the F0 part and may function to hold the ATPase inhibitor or STF1 on the F1 subunit. Also acts as a hydrophilins that enhances dry stress tolerance. Cell viability after desiccation and rehydration is due to the antioxidant capacity of the protein, which reduces the number of apoptotic cells during stress conditions by minimising the accumulation of reactive oxygen species (ROS) in the cells. The sequence is that of ATPase-stabilizing factor 15 kDa protein (STF2) from Saccharomyces cerevisiae (strain ATCC 204508 / S288c) (Baker's yeast).